The following is a 133-amino-acid chain: Gamma-crystallin 1 (133 aa).

In terms of domain architecture, Beta/gamma crystallin 'Greek key' 2 spans 1–41 (WMLYEHPNYTGHQYFLRRGEYPDFQQWMGLNDSIRSCRVIP). The tract at residues 42–46 (QHRGS) is connecting peptide. Beta/gamma crystallin 'Greek key' domains are found at residues 47 to 87 (FRLR…NVLE) and 88 to 130 (GHWI…RRVQ).

Belongs to the beta/gamma-crystallin family. Monomer.

In terms of biological role, crystallins are the dominant structural components of the vertebrate eye lens. This chain is Gamma-crystallin 1, found in Rana temporaria (European common frog).